Reading from the N-terminus, the 404-residue chain is MALRVTRNRLASTRAELGGKTCSVAGPTQKPRAALGEIGNVAVINKDVTKKTIKTEVAKKTKIPAKAEKIELPKAAVVPVKPAPEVQVTEVPDQAEPASPTPMETSGCESADLCQAFSDVILNTAIRDVDADDYDNPMLCSEYVKDIYKYLRQLEMEQSVKPNYLEGQEITGNMRAILIDWLVQVGLKFRLLQETMYMTVGIIDRFLQDHPVPKKQLQLVGVTAMFLASKYEEMYPPEISDFAYVTDRAYTTAQIRDMEMTILRVLKFQLGRPLPLQFLRRASKIYEVTAEQHTLAKYLLELSMVDYDMAHFSPSLVASAALALTLKVLDAGEWDVTLQHYMEYTAETLTPVMAHIAKNVVKVNNGQTKHMAIKGKYSTSKQMRIATISQLKSSVVKDLATQIS.

It belongs to the cyclin family. Cyclin AB subfamily. As to quaternary structure, interacts with the CDK1 protein kinase to form a serine/threonine kinase holoenzyme complex also known as maturation promoting factor (MPF). The cyclin subunit imparts substrate specificity to the complex.

Essential for the control of the cell cycle at the G2/M (mitosis) transition. The protein is G2/mitotic-specific cyclin-B1 (ccnb1) of Oryzias latipes (Japanese rice fish).